A 745-amino-acid chain; its full sequence is Cysteine protease atg4 (745 aa).

Low complexity-rich tracts occupy residues 29–42, 52–64, and 194–215; these read QQSY…APQQ, SPTS…SSST, and NNNS…NNNN. Disordered regions lie at residues 29–68 and 192–215; these read QQSY…AMGN and FQNN…NNNN. The active-site Nucleophile is Cys-262. Disordered regions lie at residues 344–363 and 439–480; these read LNRG…KEEE and QNNN…NGYN. Over residues 439–477 the composition is skewed to low complexity; it reads QNNNKNNNNNNPTTTTTTTTTATSSNNNNNQSPPSRVPN. Catalysis depends on residues Asp-562 and His-564. The interval 686–745 is disordered; sequence HIPYNPNNNQNNNQNNNNNNNKNNNNNTNQQQTPNYPPKLNTYQPDFSSDGEIDDFTMVG. Low complexity predominate over residues 688–719; sequence PYNPNNNQNNNQNNNNNNNKNNNNNTNQQQTP. The span at 734 to 745 shows a compositional bias: acidic residues; it reads SDGEIDDFTMVG.

Belongs to the peptidase C54 family.

The protein resides in the cytoplasm. It catalyses the reaction [protein]-C-terminal L-amino acid-glycyl-phosphatidylethanolamide + H2O = [protein]-C-terminal L-amino acid-glycine + a 1,2-diacyl-sn-glycero-3-phosphoethanolamine. Functionally, cysteine protease that plays a key role in autophagy by mediating both proteolytic activation and delipidation of ATG8 family proteins. The protease activity is required for proteolytic activation of ATG8 family proteins: cleaves the C-terminal amino acid of ATG8 proteins to reveal a C-terminal glycine. Exposure of the glycine at the C-terminus is essential for ATG8 proteins conjugation to phosphatidylethanolamine (PE) and insertion to membranes, which is necessary for autophagy. In addition to the protease activity, also mediates delipidation of PE-conjugated ATG8 proteins. In Dictyostelium discoideum (Social amoeba), this protein is Cysteine protease atg4 (atg4-1).